The sequence spans 318 residues: L-lactate dehydrogenase (318 aa).

NAD(+) contacts are provided by residues V18, D39, K44, Y69, and 83–84; that span reads GA. Positions 86 and 92 each coordinate substrate. NAD(+)-binding positions include S105, 122–124, and S147; that span reads VSN. 124–127 contributes to the substrate binding site; sequence NPVD. 152 to 155 provides a ligand contact to substrate; it reads DTSR. H179 functions as the Proton acceptor in the catalytic mechanism. Position 225 is a phosphotyrosine (Y225). Residue T234 coordinates substrate.

This sequence belongs to the LDH/MDH superfamily. LDH family. As to quaternary structure, homotetramer.

The protein resides in the cytoplasm. The enzyme catalyses (S)-lactate + NAD(+) = pyruvate + NADH + H(+). Its pathway is fermentation; pyruvate fermentation to lactate; (S)-lactate from pyruvate: step 1/1. Catalyzes the conversion of lactate to pyruvate. In Clostridium botulinum (strain Loch Maree / Type A3), this protein is L-lactate dehydrogenase.